The following is a 313-amino-acid chain: Aspartate carbamoyltransferase catalytic subunit (313 aa).

Positions 58 and 59 each coordinate carbamoyl phosphate. K86 serves as a coordination point for L-aspartate. Residues R108, H136, and Q139 each coordinate carbamoyl phosphate. 2 residues coordinate L-aspartate: R169 and R223. The carbamoyl phosphate site is built by G264 and P265.

It belongs to the aspartate/ornithine carbamoyltransferase superfamily. ATCase family. In terms of assembly, heterododecamer (2C3:3R2) of six catalytic PyrB chains organized as two trimers (C3), and six regulatory PyrI chains organized as three dimers (R2).

It catalyses the reaction carbamoyl phosphate + L-aspartate = N-carbamoyl-L-aspartate + phosphate + H(+). The protein operates within pyrimidine metabolism; UMP biosynthesis via de novo pathway; (S)-dihydroorotate from bicarbonate: step 2/3. Its function is as follows. Catalyzes the condensation of carbamoyl phosphate and aspartate to form carbamoyl aspartate and inorganic phosphate, the committed step in the de novo pyrimidine nucleotide biosynthesis pathway. The sequence is that of Aspartate carbamoyltransferase catalytic subunit from Chlorobium luteolum (strain DSM 273 / BCRC 81028 / 2530) (Pelodictyon luteolum).